Here is a 510-residue protein sequence, read N- to C-terminus: Histidine ammonia-lyase (510 aa).

Residues 143-145 constitute a cross-link (5-imidazolinone (Ala-Gly)); it reads ASG. Serine 144 carries the 2,3-didehydroalanine (Ser) modification.

Belongs to the PAL/histidase family. In terms of processing, contains an active site 4-methylidene-imidazol-5-one (MIO), which is formed autocatalytically by cyclization and dehydration of residues Ala-Ser-Gly.

The protein resides in the cytoplasm. It carries out the reaction L-histidine = trans-urocanate + NH4(+). The protein operates within amino-acid degradation; L-histidine degradation into L-glutamate; N-formimidoyl-L-glutamate from L-histidine: step 1/3. This chain is Histidine ammonia-lyase, found in Pseudomonas putida (strain ATCC 47054 / DSM 6125 / CFBP 8728 / NCIMB 11950 / KT2440).